The following is a 90-amino-acid chain: Small ribosomal subunit protein uS19 (90 aa).

Belongs to the universal ribosomal protein uS19 family.

In terms of biological role, protein S19 forms a complex with S13 that binds strongly to the 16S ribosomal RNA. In Thioalkalivibrio sulfidiphilus (strain HL-EbGR7), this protein is Small ribosomal subunit protein uS19.